The sequence spans 1395 residues: uncharacterized protein (1395 aa).

89 to 96 (AYKKWGKS) contributes to the ATP binding site. Disordered regions lie at residues 146-166 (EEKI…LSPP) and 205-391 (SSSS…MENR). Composition is skewed to low complexity over residues 155 to 166 (GSPSPEAELSPP) and 205 to 222 (SSSS…TSSP). Positions 230–269 (EVTKERSSEVPTTVHEKTQSKSKNEKENKFSNGTIEEKPA) are enriched in basic and acidic residues. The segment covering 287–301 (SWSSGSSEAGSSSSG) has biased composition (low complexity). Over residues 313-328 (VKVRHKAREIRNKKGR) the composition is skewed to basic residues. The span at 337-346 (KHGEKAERNI) shows a compositional bias: basic and acidic residues. The segment covering 349 to 358 (GSSSSSSSGS) has biased composition (low complexity). Residues 369-391 (PLKEIGRKDPGSTEGKDLYMENR) show a composition bias toward basic and acidic residues. 2 positions are modified to phosphoserine: Ser-814 and Ser-1080. Residues 1110–1132 (PISASELSPGGGSESEFESEKDE) are disordered. Residues Ser-1194 and Ser-1338 each carry the phosphoserine modification. Positions 1346 to 1359 (TGERDSGAKSDGFR) are enriched in basic and acidic residues. The interval 1346 to 1395 (TGERDSGAKSDGFRGKMCSSASSTSEETGSEGGGEWVGPSEEELFSRTHL) is disordered.

This is an uncharacterized protein from Homo sapiens (Human).